The sequence spans 181 residues: ATP synthase subunit b 2 (181 aa).

Low complexity predominate over residues 1–18 (MATTTHDAGHGAAEAAHG). The interval 1–20 (MATTTHDAGHGAAEAAHGSS) is disordered. A helical membrane pass occupies residues 34-54 (IFWLLVTLVVIYLILSRIALP).

The protein belongs to the ATPase B chain family. F-type ATPases have 2 components, F(1) - the catalytic core - and F(0) - the membrane proton channel. F(1) has five subunits: alpha(3), beta(3), gamma(1), delta(1), epsilon(1). F(0) has three main subunits: a(1), b(2) and c(10-14). The alpha and beta chains form an alternating ring which encloses part of the gamma chain. F(1) is attached to F(0) by a central stalk formed by the gamma and epsilon chains, while a peripheral stalk is formed by the delta and b chains.

It localises to the cell inner membrane. F(1)F(0) ATP synthase produces ATP from ADP in the presence of a proton or sodium gradient. F-type ATPases consist of two structural domains, F(1) containing the extramembraneous catalytic core and F(0) containing the membrane proton channel, linked together by a central stalk and a peripheral stalk. During catalysis, ATP synthesis in the catalytic domain of F(1) is coupled via a rotary mechanism of the central stalk subunits to proton translocation. In terms of biological role, component of the F(0) channel, it forms part of the peripheral stalk, linking F(1) to F(0). The b'-subunit is a diverged and duplicated form of b found in plants and photosynthetic bacteria. The polypeptide is ATP synthase subunit b 2 (atpF2) (Ruegeria sp. (strain TM1040) (Silicibacter sp.)).